The primary structure comprises 496 residues: Glutamyl-tRNA(Gln) amidotransferase subunit A (496 aa).

Residues K75 and S150 each act as charge relay system in the active site. S174 serves as the catalytic Acyl-ester intermediate.

It belongs to the amidase family. GatA subfamily. As to quaternary structure, heterotrimer of A, B and C subunits.

It catalyses the reaction L-glutamyl-tRNA(Gln) + L-glutamine + ATP + H2O = L-glutaminyl-tRNA(Gln) + L-glutamate + ADP + phosphate + H(+). Its function is as follows. Allows the formation of correctly charged Gln-tRNA(Gln) through the transamidation of misacylated Glu-tRNA(Gln) in organisms which lack glutaminyl-tRNA synthetase. The reaction takes place in the presence of glutamine and ATP through an activated gamma-phospho-Glu-tRNA(Gln). In Burkholderia ambifaria (strain MC40-6), this protein is Glutamyl-tRNA(Gln) amidotransferase subunit A.